The chain runs to 576 residues: Proton pump-interactor 3B (576 aa).

Residues 34–63 (SEVTTDEEEDTIFSGGDSSSGLAAEEDSSG) form a disordered region. Coiled-coil stretches lie at residues 132–155 (RMVI…LRCT) and 205–241 (EKEA…SDKL). Residues 369–381 (RSEKVHKMNREDS) show a composition bias toward basic and acidic residues. The tract at residues 369-395 (RSEKVHKMNREDSSSNSSEDGNVITDK) is disordered. The stretch at 411–467 (KKKEEEIDEEALKERKREEQLEKARLVMERKRKLQEKAAAKAAIRAQKEAEKKLKAI) forms a coiled coil. Residues 555 to 575 (WVWGLSSAALAVSLVLVVLLL) traverse the membrane as a helical segment.

It belongs to the plant Proton pump-interactor protein family.

It localises to the cell membrane. The protein localises to the endoplasmic reticulum membrane. In terms of biological role, may regulate plasma membrane ATPase activity. The polypeptide is Proton pump-interactor 3B (PPI3B) (Arabidopsis thaliana (Mouse-ear cress)).